The primary structure comprises 98 residues: Integration host factor subunit alpha (98 aa).

This sequence belongs to the bacterial histone-like protein family. Heterodimer of an alpha and a beta chain.

Functionally, this protein is one of the two subunits of integration host factor, a specific DNA-binding protein that functions in genetic recombination as well as in transcriptional and translational control. The protein is Integration host factor subunit alpha of Acinetobacter baumannii (strain AB307-0294).